The following is a 141-amino-acid chain: Nucleoside diphosphate kinase (141 aa).

ATP is bound by residues Lys-11, Phe-59, Arg-87, Thr-93, Arg-104, and Asn-114. His-117 (pros-phosphohistidine intermediate) is an active-site residue.

This sequence belongs to the NDK family. In terms of assembly, homotetramer. Mg(2+) is required as a cofactor.

Its subcellular location is the cytoplasm. The enzyme catalyses a 2'-deoxyribonucleoside 5'-diphosphate + ATP = a 2'-deoxyribonucleoside 5'-triphosphate + ADP. It carries out the reaction a ribonucleoside 5'-diphosphate + ATP = a ribonucleoside 5'-triphosphate + ADP. Its function is as follows. Major role in the synthesis of nucleoside triphosphates other than ATP. The ATP gamma phosphate is transferred to the NDP beta phosphate via a ping-pong mechanism, using a phosphorylated active-site intermediate. The polypeptide is Nucleoside diphosphate kinase (Halorhodospira halophila (strain DSM 244 / SL1) (Ectothiorhodospira halophila (strain DSM 244 / SL1))).